We begin with the raw amino-acid sequence, 95 residues long: Small ribosomal subunit protein bS20c (95 aa).

Belongs to the bacterial ribosomal protein bS20 family.

The protein localises to the plastid. The protein resides in the cyanelle. Its function is as follows. Binds directly to 16S ribosomal RNA. The protein is Small ribosomal subunit protein bS20c (rps20) of Cyanophora paradoxa.